The following is a 281-amino-acid chain: Pantothenate synthetase (281 aa).

Residue 30 to 37 (MGYLHEGH) coordinates ATP. H37 (proton donor) is an active-site residue. Residue Q60 coordinates (R)-pantoate. A beta-alanine-binding site is contributed by Q60. 146 to 149 (GEKD) lines the ATP pocket. Q152 lines the (R)-pantoate pocket. ATP-binding positions include I175 and 183–186 (KSSR).

The protein belongs to the pantothenate synthetase family. Homodimer.

Its subcellular location is the cytoplasm. The enzyme catalyses (R)-pantoate + beta-alanine + ATP = (R)-pantothenate + AMP + diphosphate + H(+). Its pathway is cofactor biosynthesis; (R)-pantothenate biosynthesis; (R)-pantothenate from (R)-pantoate and beta-alanine: step 1/1. Functionally, catalyzes the condensation of pantoate with beta-alanine in an ATP-dependent reaction via a pantoyl-adenylate intermediate. In Ruminiclostridium cellulolyticum (strain ATCC 35319 / DSM 5812 / JCM 6584 / H10) (Clostridium cellulolyticum), this protein is Pantothenate synthetase.